Here is a 111-residue protein sequence, read N- to C-terminus: UPF0060 membrane protein NFA_36830 (111 aa).

4 consecutive transmembrane segments (helical) span residues 7 to 27 (LVLFGLAALAEIGGAWLVWQG), 33 to 53 (GLWWIAAGVIALGAYGFVATF), 62 to 82 (VLAAYGGVFVVGSLAWGVLVD), and 91 to 111 (LLGAGICLVGVAVIMYAPRGG).

Belongs to the UPF0060 family.

It localises to the cell membrane. The chain is UPF0060 membrane protein NFA_36830 from Nocardia farcinica (strain IFM 10152).